Here is a 282-residue protein sequence, read N- to C-terminus: Protein GAM-1 (282 aa).

The BC-box-like signature appears at 251–260 (SLQDWARLGV).

Interacts with host HDAC1. Interacts with host E1-activating enzyme (SAE1/UBA2 heterodimer). Interacts with host retinoblastoma protein. Seems to form a complex with host E4F1 and HDAC1. Seems to form complexes with either CUL2-elongin BC complex-RBX1 or CUL5-elongin BC complex-RBX1. Interacts with TCEB1/Elongin-C, CUL2 and CUL5 in vitro.

It localises to the host nucleus. Its function is as follows. Early protein essential for viral replication. Strong and global transcriptional activator of both viral and cellular genes. Activates transcription by blocking host retinoblastoma protein (RB) and inhibiting the SUMO pathway. Inhibition of host RB leads to the activation of E2F1-dependent transcription and, in particular, of E2F1-regulated S-phase genes. Stimulation of progression from G1 to S phase allows the virus to efficiently use the cellular DNA replicating machinery to achieve viral genome replication. Blocks the SUMO pathway by targeting the E1 enzyme (SAE1/UBA2 heterodimer) to the ubiquitin-proteasome machinery. Mediates SAE1 degradation possibly through the formation of complexes with either CUL2-elongin BC complex-RBX1 or CUL5-elongin BC complex-RBX1. The degradation of UBA2 is probably a consequent effect of SAE1 disappearance. Inhibits HDAC1 sumoylation, thereby interfering with histone deacetylation mediated by HDAC1, leading to activation of transcription. Mediates induction of heat-shock response. Seems to have an antiapoptotic function. The sequence is that of Protein GAM-1 from Galliformes (FAdV-1).